The following is a 328-amino-acid chain: 2-hydroxyisoflavanone dehydratase (328 aa).

An Involved in the stabilization of the negatively charged intermediate by the formation of the oxyanion hole motif is present at residues 85 to 87; the sequence is HGG. Catalysis depends on residues Thr173, Asp272, and His304.

The protein belongs to the 'GDXG' lipolytic enzyme family.

The catalysed reaction is (2R,3S)-2,4',7-trihydroxyisoflavanone = daidzein + H2O + H(+). It catalyses the reaction 2-hydroxy-2,3-dihydrogenistein = genistein + H2O + H(+). It carries out the reaction a carboxylic ester + H2O = an alcohol + a carboxylate + H(+). It functions in the pathway secondary metabolite biosynthesis; flavonoid biosynthesis. Dehydratase that mediates the biosynthesis of isoflavonoids. Can better use 2,7-dihydroxy-4'-methoxyisoflavanone as substrate. Has also a slight carboxylesterase activity toward p-nitrophenyl butyrate. The protein is 2-hydroxyisoflavanone dehydratase (HIDM) of Glycyrrhiza echinata (Licorice).